The primary structure comprises 123 residues: Large ribosomal subunit protein bL17 (123 aa).

Belongs to the bacterial ribosomal protein bL17 family. In terms of assembly, part of the 50S ribosomal subunit. Contacts protein L32.

The chain is Large ribosomal subunit protein bL17 from Staphylococcus haemolyticus (strain JCSC1435).